The primary structure comprises 133 residues: Small ribosomal subunit protein uS15 (133 aa).

The protein belongs to the universal ribosomal protein uS15 family. As to quaternary structure, part of the 30S ribosomal subunit.

The protein is Small ribosomal subunit protein uS15 of Methanosphaera stadtmanae (strain ATCC 43021 / DSM 3091 / JCM 11832 / MCB-3).